The sequence spans 641 residues: 1,3-beta-glucanosyltransferase PGA5 (641 aa).

The signal sequence occupies residues 1–23; that stretch reads MTTLSTIWLFLITITAIFQLGLS. A glycan (N-linked (GlcNAc...) asparagine) is linked at Asn-25. Cys-106 and Cys-135 are oxidised to a cystine. (1,3-beta-D-glucosyl)n is bound by residues Tyr-124, Asn-192, Glu-193, Asp-234, and Arg-239. The Proton donor role is filled by Glu-193. 6 disulfide bridges follow: Cys-248/Cys-390, Cys-276/Cys-307, Cys-424/Cys-474, Cys-426/Cys-528, Cys-433/Cys-498, and Cys-451/Cys-456. Glu-304 acts as the Nucleophile in catalysis. Tyr-336 lines the (1,3-beta-D-glucosyl)n pocket. The tract at residues 535 to 613 is disordered; sequence KEEEKEVQEE…SPKTSKSIAG (79 aa). The span at 571–581 shows a compositional bias: basic and acidic residues; it reads KSKEKEKGKLI. Acidic residues predominate over residues 582–593; sequence EEEEEEEEEEEE. Positions 596–610 are enriched in polar residues; it reads KTPSSGEKSPKTSKS. A glycan (N-linked (GlcNAc...) asparagine) is linked at Asn-621. Asp-622 carries the GPI-anchor amidated aspartate lipid modification. Residues 623-641 constitute a propeptide, removed in mature form; it reads SIWKTFIEILFTCSAAILI.

It belongs to the glycosyl hydrolase 72 family.

The protein localises to the cell membrane. In terms of biological role, splits internally a 1,3-beta-glucan molecule and transfers the newly generated reducing end (the donor) to the non-reducing end of another 1,3-beta-glucan molecule (the acceptor) forming a 1,3-beta linkage, resulting in the elongation of 1,3-beta-glucan chains in the cell wall. Involved in spore wall assembly. This is 1,3-beta-glucanosyltransferase PGA5 (PGA5) from Candida albicans (strain SC5314 / ATCC MYA-2876) (Yeast).